A 290-amino-acid chain; its full sequence is tRNA pseudouridine synthase A (290 aa).

Asp-56 functions as the Nucleophile in the catalytic mechanism. Residue Tyr-109 coordinates substrate.

This sequence belongs to the tRNA pseudouridine synthase TruA family.

It carries out the reaction uridine(38/39/40) in tRNA = pseudouridine(38/39/40) in tRNA. In terms of biological role, formation of pseudouridine at positions 38, 39 and 40 in the anticodon stem and loop of transfer RNAs. This is tRNA pseudouridine synthase A from Methanobrevibacter smithii (strain ATCC 35061 / DSM 861 / OCM 144 / PS).